We begin with the raw amino-acid sequence, 60 residues long: MLTVECLIYAINFTSDSIGRSLKLWGTSRRLRFAETESFHNKKPTSLFTQHEFSYSCAYQ.

This is an uncharacterized protein from Schizosaccharomyces pombe (strain 972 / ATCC 24843) (Fission yeast).